Consider the following 335-residue polypeptide: Beta-hexosaminidase (335 aa).

Residues D60, R68, R133, and K163 to H164 contribute to the substrate site. H176 serves as the catalytic Proton donor/acceptor. D247 acts as the Nucleophile in catalysis.

The protein belongs to the glycosyl hydrolase 3 family. NagZ subfamily.

The protein resides in the cytoplasm. It carries out the reaction Hydrolysis of terminal non-reducing N-acetyl-D-hexosamine residues in N-acetyl-beta-D-hexosaminides.. It functions in the pathway cell wall biogenesis; peptidoglycan recycling. Functionally, plays a role in peptidoglycan recycling by cleaving the terminal beta-1,4-linked N-acetylglucosamine (GlcNAc) from peptide-linked peptidoglycan fragments, giving rise to free GlcNAc, anhydro-N-acetylmuramic acid and anhydro-N-acetylmuramic acid-linked peptides. The protein is Beta-hexosaminidase of Xylella fastidiosa (strain M23).